A 432-amino-acid polypeptide reads, in one-letter code: Adenylosuccinate synthetase (432 aa).

Residues 13 to 19 (GDEGKGK) and 41 to 43 (GHT) contribute to the GTP site. Asp14 acts as the Proton acceptor in catalysis. 2 residues coordinate Mg(2+): Asp14 and Gly41. IMP contacts are provided by residues 14-17 (DEGK), 39-42 (NAGH), Thr130, Arg144, Gln225, Thr240, and Arg304. His42 (proton donor) is an active-site residue. 300 to 306 (ATTGRKR) provides a ligand contact to substrate. GTP-binding positions include Arg306, 332 to 334 (KLD), and 415 to 417 (STG).

This sequence belongs to the adenylosuccinate synthetase family. As to quaternary structure, homodimer. Requires Mg(2+) as cofactor.

It localises to the cytoplasm. The catalysed reaction is IMP + L-aspartate + GTP = N(6)-(1,2-dicarboxyethyl)-AMP + GDP + phosphate + 2 H(+). The protein operates within purine metabolism; AMP biosynthesis via de novo pathway; AMP from IMP: step 1/2. In terms of biological role, plays an important role in the de novo pathway of purine nucleotide biosynthesis. Catalyzes the first committed step in the biosynthesis of AMP from IMP. The polypeptide is Adenylosuccinate synthetase (Tolumonas auensis (strain DSM 9187 / NBRC 110442 / TA 4)).